The following is a 43-amino-acid chain: S-layer protein 1 (43 aa).

Its subcellular location is the secreted. The protein resides in the cell wall. The protein localises to the S-layer. Functionally, the S-layer is a paracrystalline mono-layered assembly of proteins which coat the surface of bacteria. This chain is S-layer protein 1, found in Bacillus thuringiensis subsp. konkukian.